The chain runs to 757 residues: MDVNPTLLFLKVPAQNAISTTFPYTGDPPYSHGTGTGYTMDTVNRTHQYSEKGKWTTNTETGAPQLNPIDGPLPEDNEPSGYAQTDCVLEAMAFLEESHPGIFENSCLETMEVIQQTRVDKLTQGRQTYDWTLNRNQPAATALANTIEVFRSNGLTANESGRLIDFLKDVIESMDKEEMEITTHFQRKRRVRDNMTKKMVTQRTIGKKKQRLNKRSYLIRALTLNTMTKDAERGKLKRRAIATPGMQIRGFVYFVETLARSICEKLEQSGLPVGGNEKKAKLANVVRKMMTNSQDTELSFTITGDNTKWNENQNPRMFLAMITYITRNQPEWFRNVLSIAPIMFSNKMARLGKGYMFESKSMKLRTQIPAEMLASIDLKYFNESTRKKIEKIRPLLIDGTVSLSPGMMMGMFNMLSTVLGVSILNLGQKKYTKTTYWWDGLQSSDDFALILNAPNHEGIQAGVDRFYRTCKLVGINMSKKKSYINRTGTFEFTSFFYRYGFVANFSMELPSFGVSGINESADMSIGVTVIKNNMINNDLGPATAQMALQLFIKDYRYTYRCHRGDTQIQTRRSFELKKLWEQTRSKAGLLVSDGGPNLYNIRNLHIPEVCLKWELMDEDYQGRLCNPLNPFVSHKEIESVNNAVVMPAHGPAKSMEYDAVATTHSWIPKRNRSILNTSQRGILEDEQMYQKCCNLFEKFFPSSSYRRPVGISSMVEAMVSRARIDARIDFESGRIKKEEFAEIMKICSTIEELRRQK.

The disordered stretch occupies residues 50 to 82; sequence SEKGKWTTNTETGAPQLNPIDGPLPEDNEPSGY. Over residues 55–64 the composition is skewed to polar residues; it reads WTTNTETGAP. 2 consecutive short sequence motifs (nuclear localization signal) follow at residues 187-195 and 203-216; these read RKRRVRDNM and RTIG…NKRS. Positions 249–256 are promoter-binding site; it reads RGFVYFVE. Residues 286 to 483 form the RdRp catalytic domain; sequence VRKMMTNSQD…GINMSKKKSY (198 aa).

It belongs to the influenza viruses polymerase PB1 family. In terms of assembly, influenza RNA polymerase is composed of three subunits: PB1, PB2 and PA. Interacts (via N-terminus) with PA (via C-terminus). Interacts (via C-terminus) with PB2 (via N-terminus); this interaction is essential for transcription initiation. Phosphorylated by host PRKCA.

The protein resides in the host nucleus. The protein localises to the host cytoplasm. It carries out the reaction RNA(n) + a ribonucleoside 5'-triphosphate = RNA(n+1) + diphosphate. Its function is as follows. RNA-dependent RNA polymerase which is responsible for replication and transcription of virus RNA segments. The transcription of viral mRNAs occurs by a unique mechanism called cap-snatching. 5' methylated caps of cellular mRNAs are cleaved after 10-13 nucleotides by PA. In turn, these short capped RNAs are used as primers by PB1 for transcription of viral mRNAs. During virus replication, PB1 initiates RNA synthesis and copy vRNA into complementary RNA (cRNA) which in turn serves as a template for the production of more vRNAs. The polypeptide is RNA-directed RNA polymerase catalytic subunit (Influenza A virus (strain A/Japan/305/1957 H2N2)).